The primary structure comprises 393 residues: Uroporphyrinogen decarboxylase, chloroplastic (393 aa).

Residues methionine 1–valine 64 form a disordered region. Over residues alanine 23–proline 37 the composition is skewed to low complexity. The segment covering serine 38 to glycine 50 has biased composition (basic and acidic residues). Substrate contacts are provided by residues arginine 73–arginine 77, phenylalanine 92, serine 122, aspartate 123, tyrosine 200, serine 255, and histidine 370.

It belongs to the uroporphyrinogen decarboxylase family. As to quaternary structure, homodimer.

Its subcellular location is the plastid. The protein localises to the chloroplast. It carries out the reaction uroporphyrinogen III + 4 H(+) = coproporphyrinogen III + 4 CO2. Its pathway is porphyrin-containing compound metabolism; protoporphyrin-IX biosynthesis; coproporphyrinogen-III from 5-aminolevulinate: step 4/4. Catalyzes the decarboxylation of four acetate groups of uroporphyrinogen-III to yield coproporphyrinogen-III. In Zea mays (Maize), this protein is Uroporphyrinogen decarboxylase, chloroplastic (LES22).